The following is a 254-amino-acid chain: Triosephosphate isomerase (254 aa).

Substrate is bound at residue 12-14; the sequence is NWK. His99 functions as the Electrophile in the catalytic mechanism. The active-site Proton acceptor is Glu169. Substrate contacts are provided by residues Gly175, Ser214, and 235–236; that span reads GG.

Belongs to the triosephosphate isomerase family. In terms of assembly, homodimer.

Its subcellular location is the cytoplasm. It carries out the reaction D-glyceraldehyde 3-phosphate = dihydroxyacetone phosphate. The protein operates within carbohydrate biosynthesis; gluconeogenesis. It functions in the pathway carbohydrate degradation; glycolysis; D-glyceraldehyde 3-phosphate from glycerone phosphate: step 1/1. In terms of biological role, involved in the gluconeogenesis. Catalyzes stereospecifically the conversion of dihydroxyacetone phosphate (DHAP) to D-glyceraldehyde-3-phosphate (G3P). This chain is Triosephosphate isomerase, found in Xanthobacter autotrophicus (strain ATCC BAA-1158 / Py2).